The primary structure comprises 464 residues: Secretion-regulating guanine nucleotide exchange factor (464 aa).

7 RCC1 repeats span residues 15–67 (AVLF…VTDG), 68–119 (GDLF…LTEK), 120–171 (GQVL…TTAT), 172–230 (GSVF…LTDT), 231–283 (GELY…KTET), 284–351 (GKVF…VIRD), and 352–402 (KCCS…LAVC). A disordered region spans residues 422–464 (DDTENTESQGAVDRDRLEGETISDLNPDRTRNGGGGCESETVQ). Position 429 is a phosphoserine (S429).

Interacts with SEC5. The interaction occurs only in the presence of magnesium or manganese and is stimulated by dCTP or GTP.

It is found in the cytoplasm. The protein localises to the nucleus. Probable guanine nucleotide exchange factor (GEF), which may be involved in the secretion process. The chain is Secretion-regulating guanine nucleotide exchange factor (Sergef) from Mus musculus (Mouse).